Consider the following 215-residue polypeptide: Pyrrolidone-carboxylate peptidase (215 aa).

Catalysis depends on residues Glu80, Cys143, and His167.

Belongs to the peptidase C15 family. As to quaternary structure, homotetramer.

The protein localises to the cytoplasm. It carries out the reaction Release of an N-terminal pyroglutamyl group from a polypeptide, the second amino acid generally not being Pro.. Removes 5-oxoproline from various penultimate amino acid residues except L-proline. The protein is Pyrrolidone-carboxylate peptidase of Bacillus cereus (strain 03BB102).